A 346-amino-acid chain; its full sequence is FMRFamide-related peptides type HF-1 (346 aa).

Residues 1–19 form the signal peptide; the sequence is MTSLCLTIAPAVLSLICLS. Residues 20–45 constitute a propeptide that is removed on maturation; it reads SYGWAEDNNGIHTLDDGDNDPFFRHN. The residue at position 51 (Phe51) is a Phenylalanine amide. Positions 54–94 are excised as a propeptide; the sequence is AFVPLWDNADDSLVRKNLLTHWSEFPLSPALSSSDVFSRNS. Position 100 is a phenylalanine amide (Phe100). A propeptide spanning residues 103–109 is cleaved from the precursor; it reads SYPPYQD. Phe115 carries the post-translational modification Phenylalanine amide. The propeptide occupies 118–203; it reads SHQPDIDEYL…EILSNEDDLE (86 aa). Residues 137-185 are disordered; it reads YRKRRSEDGDSKEDGLNRVARSADANQQSKNTQSNKFGKDLQKRETKKE. The segment covering 141–152 has biased composition (basic and acidic residues); the sequence is RSEDGDSKEDGL. The span at 160–172 shows a compositional bias: polar residues; sequence DANQQSKNTQSNK. The span at 173–185 shows a compositional bias: basic and acidic residues; the sequence is FGKDLQKRETKKE. A phenylalanine amide mark is found at Phe209 and Phe216. Positions 219 to 226 are excised as a propeptide; the sequence is GDEDESYD. Phe232 carries the post-translational modification Phenylalanine amide. Residues 235-243 constitute a propeptide that is removed on maturation; it reads SLRHDQEFE. A phenylalanine amide mark is found at Phe249 and Phe256. Residues 259–267 constitute a propeptide that is removed on maturation; the sequence is GDEDDAREE. Phe273 bears the Phenylalanine amide mark. The propeptide occupies 276 to 283; sequence SSNEDEDI. The residue at position 290 (Phe290) is a Phenylalanine amide. A propeptide spanning residues 293-301 is cleaved from the precursor; that stretch reads SGNEDGDVD. A phenylalanine amide mark is found at Phe307 and Phe314. The propeptide occupies 317–325; that stretch reads SEKEDGDVD. Phe331 and Phe338 each carry phenylalanine amide. A propeptide spanning residues 341–346 is cleaved from the precursor; it reads GDSETS.

Belongs to the FARP (FMRFamide related peptide) family. As to expression, central nervous system.

The protein resides in the secreted. Can function as both cardioregulatory hormones and transmitters and may regulate cardiovascular function. The protein is FMRFamide-related peptides type HF-1 of Cornu aspersum (Brown garden snail).